A 446-amino-acid polypeptide reads, in one-letter code: Alkylglycerol monooxygenase (446 aa).

The next 2 helical transmembrane spans lie at 43-63 (ATVY…AWKG) and 110-130 (WDSP…YYWF). A Fatty acid hydroxylase domain is found at 118-248 (LTFLGVDFGY…LIIWDRMFGT (131 aa)). The Histidine box-1 signature appears at 131 to 135 (HRMAH). The Histidine box-2 motif lies at 144–148 (HQTHH). Residues 167 to 187 (YFSWMFYWPMAFCIPPSVFAV) traverse the membrane as a helical segment. The Histidine box-3 signature appears at 220–224 (HRVHH). 3 helical membrane passes run 339–359 (MMHF…KLIL), 362–382 (ATLL…GFIF), and 412–434 (VPYL…GLKA).

The protein belongs to the sterol desaturase family. TMEM195 subfamily. The cofactor is Fe cation.

Its subcellular location is the endoplasmic reticulum membrane. The catalysed reaction is 1-O-(1,2-saturated-alkyl)-sn-glycerol + (6R)-L-erythro-5,6,7,8-tetrahydrobiopterin + O2 = a 1-(1-hydroxyalkyl)-sn-glycerol + (6R)-L-erythro-6,7-dihydrobiopterin + H2O. Functionally, glyceryl-ether monooxygenase that cleaves the O-alkyl bond of ether lipids. Ether lipids are essential components of brain membranes. The sequence is that of Alkylglycerol monooxygenase (agmo) from Xenopus tropicalis (Western clawed frog).